Here is a 1242-residue protein sequence, read N- to C-terminus: Structural polyprotein (1242 aa).

The segment at 14-101 is disordered; sequence WRPRMPPRPW…PKRKPGRRER (88 aa). The span at 26 to 42 shows a compositional bias: low complexity; the sequence is RMPTMQRPDQQARQMQQ. Positions 35-66 are host transcription inhibition; it reads QQARQMQQLIAAVSTLALRQNAAAPQRGKKKQ. A Nuclear localization signal motif is present at residues 59-96; that stretch reads PQRGKKKQPRRKKPKPQPEKPKKQEQKPKQKKAPKRKP. A compositionally biased stretch (basic residues) spans 61-73; sequence RGKKKQPRRKKPK. The span at 74-86 shows a compositional bias: basic and acidic residues; sequence PQPEKPKKQEQKP. The interval 82 to 111 is binding to the viral RNA; sequence QEQKPKQKKAPKRKPGRRERMCMKIEHDCI. Over residues 87 to 98 the composition is skewed to basic residues; the sequence is KQKKAPKRKPGR. The tract at residues 96–110 is ribosome-binding; it reads PGRRERMCMKIEHDC. A disulfide bridge links Cys110 with Cys125. Positions 110–258 constitute a Peptidase S3 domain; it reads CIFEVKHEGK…KITPEGTVEW (149 aa). His136 serves as the catalytic Charge relay system. Residues 141 to 151 carry the Nuclear export signal motif; sequence IDNADLARLSY. Positions 152-157 are interaction with spike glycoprotein E2; sequence KKSSKY. Asp158 (charge relay system) is an active-site residue. Residues 180–190 form a dimerization of the capsid protein region; sequence PEGHYNWHYGA. The active-site Charge relay system is Ser210. Residues 216-220 form a dimerization of the capsid protein region; it reads DNKGP. The segment at 259–272 is functions as an uncleaved signal peptide for the precursor of protein E3/E2; the sequence is AASTVTAMCLLTNI. Cystine bridges form between Cys267/Cys276, Cys281/Cys285, Cys284/Cys316, Cys343/Cys449, Cys346/Cys352, Cys415/Cys429, Cys477/Cys589, and Cys527/Cys544. The N-linked (GlcNAc...) asparagine; by host glycan is linked to Asn271. The Extracellular segment spans residues 325–690; it reads STANHFNAYK…YYYGLHPTTT (366 aa). Interaction with host Mxra8 receptor regions lie at residues 350 to 353 and 386 to 388; these read HSCH and HDH. Interaction with host Mxra8 receptor stretches follow at residues 508–511 and 540–546; these read QSGN and TINSCTV. N-linked (GlcNAc...) asparagine; by host glycosylation is present at Asn586. Residues 691-711 traverse the membrane as a helical segment; it reads IVVVIRVSVVVLLSFAASVYM. Residues 712 to 746 are Cytoplasmic-facing; that stretch reads CVVARTKCLTPYALTPGAVVPVTIGVLCCAPKAHA. The interaction with the capsid protein stretch occupies residues 714-718; it reads VARTK. S-palmitoyl cysteine; by host attachment occurs at residues Cys719, Cys739, and Cys740. A transient transmembrane before p62-6K protein processing region spans residues 719–739; sequence CLTPYALTPGAVVPVTIGVLC. Cys719 and Cys740 are disulfide-bonded. The Extracellular segment spans residues 747–761; sequence ASFAEGMAYLWDNNQ. An N-linked (GlcNAc...) asparagine; by host glycan is attached at Asn760. A helical membrane pass occupies residues 762 to 782; that stretch reads SMFWMELTGPLALLILATCCA. Residues 783–785 are Cytoplasmic-facing; it reads RSL. The helical transmembrane segment at 786 to 806 threads the bilayer; that stretch reads LSCCKGSFLVAMSIGSAVASA. Residues 807–1217 lie on the Extracellular side of the membrane; that stretch reads YEHTAIIPNQ…STAMTWAQHL (411 aa). 4 disulfides stabilise this stretch: Cys855–Cys920, Cys868–Cys900, Cys869–Cys902, and Cys874–Cys884. The interval 890–907 is E1 fusion peptide loop; it reads VYPFMWGGAYCFCDSENT. N-linked (GlcNAc...) asparagine; by host glycans are attached at residues Asn947 and Asn1076. 4 cysteine pairs are disulfide-bonded: Cys1065/Cys1077, Cys1107/Cys1180, Cys1112/Cys1184, and Cys1134/Cys1174. Residues 1218–1238 traverse the membrane as a helical segment; the sequence is AGGVGLLIALAVLILVIVTCV. The S-palmitoyl cysteine; by host moiety is linked to residue Cys1237. The Cytoplasmic segment spans residues 1239 to 1242; sequence TLRR.

Homodimer. Homomultimer. Interacts with host karyopherin KPNA4; this interaction allows the nuclear import of the viral capsid protein. Interacts with spike glycoprotein E2. Interacts with host IRAK1; the interaction leads to inhibition of IRAK1-dependent signaling. As to quaternary structure, the precursor of protein E3/E2 and E1 form a heterodimer shortly after synthesis. In terms of assembly, the precursor of protein E3/E2 and E1 form a heterodimer shortly after synthesis. Processing of the precursor of protein E3/E2 into E2 and E3 results in a heterodimer of the spike glycoproteins E2 and E1. Spike at virion surface are constituted of a trimer of E2-E1 heterodimers. After target cell attachment and endocytosis, E1 change conformation to form homotrimers. Interacts with 6K protein. Interacts with spike glycoprotein E1. Processing of the precursor of protein E3/E2 into E2 and E3 results in a heterodimer of the spike glycoproteins E2 and E1. Spike at virion surface are constituted of a trimer of E2-E1 heterodimers. Interacts with 6K protein. Interacts with host MXRA8; this interaction mediates virus entry. As to quaternary structure, oligomer. Interacts with spike glycoprotein E1. Interacts with spike glycoprotein E2. Post-translationally, structural polyprotein: Specific enzymatic cleavages in vivo yield mature proteins. Capsid protein is auto-cleaved during polyprotein translation, unmasking a signal peptide at the N-terminus of the precursor of E3/E2. The remaining polyprotein is then targeted to the host endoplasmic reticulum, where host signal peptidase cleaves it into pE2, 6K and E1 proteins. pE2 is further processed to mature E3 and E2 by host furin in trans-Golgi vesicle. In terms of processing, palmitoylated via thioester bonds. These palmitoylations may induce disruption of the C-terminus transmembrane. This would result in the reorientation of E2 C-terminus from lumenal to cytoplasmic side. N-glycosylated. Post-translationally, palmitoylated via thioester bonds.

It localises to the virion. The protein localises to the host cytoplasm. Its subcellular location is the host cell membrane. The protein resides in the host nucleus. It is found in the virion membrane. It localises to the host Golgi apparatus. The protein localises to the host trans-Golgi network. Its subcellular location is the host endoplasmic reticulum. It catalyses the reaction Autocatalytic release of the core protein from the N-terminus of the togavirus structural polyprotein by hydrolysis of a -Trp-|-Ser- bond.. In terms of biological role, forms an icosahedral capsid with a T=4 symmetry composed of 240 copies of the capsid protein surrounded by a lipid membrane through which penetrate 80 spikes composed of trimers of E1-E2 heterodimers. The capsid protein binds to the viral RNA genome at a site adjacent to a ribosome binding site for viral genome translation following genome release. Possesses a protease activity that results in its autocatalytic cleavage from the nascent structural protein. Following its self-cleavage, the capsid protein transiently associates with ribosomes, and within several minutes the protein binds to viral RNA and rapidly assembles into icosahedric core particles. The resulting nucleocapsid eventually associates with the cytoplasmic domain of the spike glycoprotein E2 at the cell membrane, leading to budding and formation of mature virions. In case of infection, new virions attach to target cells and after clathrin-mediated endocytosis their membrane fuses with the host endosomal membrane. This leads to the release of the nucleocapsid into the cytoplasm, followed by an uncoating event necessary for the genomic RNA to become accessible. The uncoating might be triggered by the interaction of capsid proteins with ribosomes. Binding of ribosomes would release the genomic RNA since the same region is genomic RNA-binding and ribosome-binding. Specifically inhibits interleukin-1 receptor-associated kinase 1/IRAK1-dependent signaling during viral entry, representing a means by which the alphaviruses may evade innate immune detection and activation prior to viral gene expression. Functionally, provides the signal sequence for the translocation of the precursor of protein E3/E2 to the host endoplasmic reticulum. Furin-cleaved E3 remains associated with spike glycoprotein E1 and mediates pH protection of the latter during the transport via the secretory pathway. After virion release from the host cell, the assembly protein E3 is gradually released in the extracellular space. Plays a role in viral attachment to target host cell, by binding to the cell receptor MXRA8. Synthesized as a p62 precursor which is processed by furin at the cell membrane just before virion budding, giving rise to E2-E1 heterodimer. The p62-E1 heterodimer is stable, whereas E2-E1 is unstable and dissociate at low pH. p62 is processed at the last step, presumably to avoid E1 fusion activation before its final export to cell surface. E2 C-terminus contains a transitory transmembrane that would be disrupted by palmitoylation, resulting in reorientation of the C-terminal tail from lumenal to cytoplasmic side. This step is critical since E2 C-terminus is involved in budding by interacting with capsid proteins. This release of E2 C-terminus in cytoplasm occurs lately in protein export, and precludes premature assembly of particles at the endoplasmic reticulum membrane. Its function is as follows. Acts as a viroporin that participates in virus glycoprotein processing and transport to the plasma membrane, cell permeabilization and budding of viral particles. Disrupts the calcium homeostasis of the cell, probably at the endoplasmic reticulum level. This leads to cytoplasmic calcium elevation. Because of its lipophilic properties, the 6K protein is postulated to influence the selection of lipids that interact with the transmembrane domains of the glycoproteins, which, in turn, affects the deformability of the bilayer required for the extreme curvature that occurs as budding proceeds. Present in low amount in virions, about 3% compared to viral glycoproteins. In terms of biological role, class II viral fusion protein. Fusion activity is inactive as long as E1 is bound to E2 in mature virion. After virus attachment to target cell via host MXRA8 and endocytosis, acidification of the endosome induce dissociation of E1/E2 heterodimer and concomitant trimerization of the E1 subunits. This E1 trimer is fusion active, and promotes release of viral nucleocapsid in cytoplasm after endosome and viral membrane fusion. Efficient fusion requires the presence of cholesterol and sphingolipid in the target membrane. The polypeptide is Structural polyprotein (Mayaro virus (strain Brazil) (MAYV)).